We begin with the raw amino-acid sequence, 113 residues long: UPF0342 protein MGAS2096_Spy0691 (113 aa).

This sequence belongs to the UPF0342 family.

In Streptococcus pyogenes serotype M12 (strain MGAS2096), this protein is UPF0342 protein MGAS2096_Spy0691.